The following is a 207-amino-acid chain: Ribonuclease HII (207 aa).

Residues D12–G201 enclose the RNase H type-2 domain. A divalent metal cation is bound by residues D18, E19, and D110.

This sequence belongs to the RNase HII family. Mn(2+) serves as cofactor. It depends on Mg(2+) as a cofactor.

It localises to the cytoplasm. It carries out the reaction Endonucleolytic cleavage to 5'-phosphomonoester.. In terms of biological role, endonuclease that specifically degrades the RNA of RNA-DNA hybrids. The polypeptide is Ribonuclease HII (Pseudomonas putida (strain ATCC 47054 / DSM 6125 / CFBP 8728 / NCIMB 11950 / KT2440)).